Reading from the N-terminus, the 947-residue chain is Zinc finger CCCH domain-containing protein 18 (947 aa).

M1 carries the post-translational modification N-acetylmethionine. Disordered regions lie at residues 1–218, 275–295, and 387–921; these read MDVA…PRPT, GGPV…TESA, and YTEA…TLSR. Phosphoserine occurs at positions 6, 32, 44, 57, 63, 70, 74, 79, and 91. A compositionally biased stretch (basic and acidic residues) spans 73-85; the sequence is KSQDQDSEAHELS. A compositionally biased stretch (acidic residues) spans 94–104; the sequence is EEGDDAEEDGT. T104 is subject to Phosphothreonine. 2 positions are modified to phosphoserine: S105 and S113. Basic and acidic residues predominate over residues 105 to 119; that stretch reads SDLRDEASSVTRELD. Composition is skewed to acidic residues over residues 120-131 and 138-153; these read EHELDYDEEVPE and QEEE…EEEK. A compositionally biased stretch (basic and acidic residues) spans 160–185; the sequence is EEGKPDVQSVGEKEPTEAAKEKKKED. S168 carries the post-translational modification Phosphoserine. Residues 186 to 202 are compositionally biased toward acidic residues; the sequence is DDGEIDDGEIDDDDLEE. The segment covering 203–212 has biased composition (basic and acidic residues); that stretch reads GEVKDPSDRK. The C3H1-type zinc finger occupies 214–240; the sequence is RPRPTCRFFMKGNCTWGMNCRFIHPGV. Residues 391–479 show a composition bias toward basic and acidic residues; that stretch reads EPYHNYRDRE…DRDKDKEKPK (89 aa). S482 is subject to Phosphoserine. A Glycyl lysine isopeptide (Lys-Gly) (interchain with G-Cter in SUMO2) cross-link involves residue K505. A compositionally biased stretch (basic and acidic residues) spans 505–515; that stretch reads KRADEWKDPWR. Residues S527, S529, and S531 each carry the phosphoserine modification. The segment covering 540–601 has biased composition (low complexity); the sequence is SASSASASNS…SRSRSFSSSP (62 aa). Positions 602 to 611 are enriched in pro residues; that stretch reads SPSPTPSPHR. Residues K617 and K656 each participate in a glycyl lysine isopeptide (Lys-Gly) (interchain with G-Cter in SUMO2) cross-link. Basic and acidic residues predominate over residues 656–665; sequence KPGDLREARR. 2 stretches are compositionally biased toward low complexity: residues 687–720 and 731–745; these read GSSY…SVHS and ASPV…PTPA. Residues 755 to 769 are compositionally biased toward basic and acidic residues; that stretch reads KKEDGVREEKRKRDP. Positions 773-804 are enriched in low complexity; sequence PPKSSKAPAGGKASQQAAAPQQAAPGQPQQGS. The residue at position 809 (K809) is an N6-acetyllysine. A Glycyl lysine isopeptide (Lys-Gly) (interchain with G-Cter in SUMO2) cross-link involves residue K812. Over residues 819–836 the composition is skewed to basic and acidic residues; it reads AAEKGSRKRYEPSDKDRQ. S837, S846, S862, S887, and S890 each carry phosphoserine. A compositionally biased stretch (low complexity) spans 887–918; the sequence is SPQSKSSSKVTSVPGKATDTATAGTKSGKAST. Residue K902 forms a Glycyl lysine isopeptide (Lys-Gly) (interchain with G-Cter in SUMO2) linkage. Residues 915-944 adopt a coiled-coil conformation; sequence KASTLSRREELLKQLKAVEDAIARKRAKIP.

In terms of assembly, interacts with ZFC3H1 in a RNase-insensitive manner.

The protein resides in the nucleus. The sequence is that of Zinc finger CCCH domain-containing protein 18 (Zc3h18) from Rattus norvegicus (Rat).